A 219-amino-acid chain; its full sequence is Large ribosomal subunit protein uL4 (219 aa).

The interval 45–103 is disordered; it reads ARRQGTHATKTRGQVRGGGRKPYRQKGTGRARQGSIRAPQFTGGGTVHGPQPRDYDQRT. Over residues 62 to 73 the composition is skewed to basic residues; the sequence is GGRKPYRQKGTG.

It belongs to the universal ribosomal protein uL4 family. As to quaternary structure, part of the 50S ribosomal subunit.

Its function is as follows. One of the primary rRNA binding proteins, this protein initially binds near the 5'-end of the 23S rRNA. It is important during the early stages of 50S assembly. It makes multiple contacts with different domains of the 23S rRNA in the assembled 50S subunit and ribosome. Functionally, forms part of the polypeptide exit tunnel. The sequence is that of Large ribosomal subunit protein uL4 from Corynebacterium kroppenstedtii (strain DSM 44385 / JCM 11950 / CIP 105744 / CCUG 35717).